A 1687-amino-acid polypeptide reads, in one-letter code: Muscle calcium channel subunit alpha-1 (1687 aa).

The interval 1–33 is disordered; the sequence is MDDAVCPTETDNVQNKQKATTPKRTQRRGGKQQ. Topologically, residues 1 to 61 are cytoplasmic; the sequence is MDDAVCPTET…IFCIKIVDSK (61 aa). Residues 9–23 show a composition bias toward polar residues; that stretch reads ETDNVQNKQKATTPK. The I repeat unit spans residues 48-330; it reads NPLRIFCIKI…LILGVLSGEF (283 aa). The helical transmembrane segment at 62–80 threads the bilayer; it reads LFEYFILLTIFANCVALAV. Topologically, residues 81 to 99 are extracellular; that stretch reads YTPYPSGDSNITNQMLEKI. N90 carries N-linked (GlcNAc...) asparagine glycosylation. A helical transmembrane segment spans residues 100-117; it reads EYIFLVIFTSECVMKIIA. Residues 118-130 lie on the Cytoplasmic side of the membrane; sequence YGFVLHTGSYLRN. Residues 131 to 145 form a helical membrane-spanning segment; that stretch reads GWNFLDFFIVVIGMI. Residues 146–157 are Extracellular-facing; the sequence is STALSNLVKEGF. A helical membrane pass occupies residues 158–176; it reads DVKALRAFRVLRPLRLVSG. The Cytoplasmic portion of the chain corresponds to 177 to 196; sequence VPSLQVVLNSILKAMIPLLH. A helical transmembrane segment spans residues 197–216; that stretch reads IALLVLFVIIIYAIIGLELF. At 217-302 the chain is on the extracellular side; sequence SGKLHKTCRH…SIQDAMGSSW (86 aa). Residue E285 coordinates Ca(2+). Residues 303 to 327 traverse the membrane as a helical segment; that stretch reads EWIYFVSMVILGAFFVMNLILGVLS. The Cytoplasmic portion of the chain corresponds to 328–434; that stretch reads GEFSKERTKA…RACRKAVKSQ (107 aa). An II repeat occupies 420 to 667; sequence NRRIRRACRK…VFLAIAVDNL (248 aa). The chain crosses the membrane as a helical span at residues 435–454; sequence AFYWLIILLVFLNTGVLATE. The Extracellular segment spans residues 455 to 467; sequence HYRQPIWLDQFQE. A helical transmembrane segment spans residues 468 to 487; that stretch reads YTNIFFIALFTCEMILKMYS. At 488–496 the chain is on the cytoplasmic side; that stretch reads LGFQGYFVS. Residues 497-515 traverse the membrane as a helical segment; that stretch reads LFNRFDCFVVIGSISEMVL. Residues 516–525 are Extracellular-facing; sequence TSSELMAPLG. A helical membrane pass occupies residues 526–544; sequence VSVLRCVRLLRVFKVTKYW. The Cytoplasmic segment spans residues 545 to 563; the sequence is HSLSNLVASLLNSIQSIAS. Residues 564–583 traverse the membrane as a helical segment; the sequence is LLLLLFLFIVIFGLLGMQVF. Residues 584–639 are Extracellular-facing; that stretch reads GGRFTFKPEEEKPRSNFDSFYQSLLTVFQILTGEDWNVVMYDGIRAYGGVFSFGIV. E617 contributes to the Ca(2+) binding site. The chain crosses the membrane as a helical span at residues 640–664; it reads ACIYYIILFICGNYILLNVFLAIAV. The Cytoplasmic segment spans residues 665–785; sequence DNLADADSLS…TNRFRIFCHR (121 aa). The III repeat unit spans residues 777-1059; the sequence is NRFRIFCHRL…IFVGFVIVTF (283 aa). A helical transmembrane segment spans residues 786-809; that stretch reads LCNHSNFGNFILCCIMFSSAMLAA. Over 810–826 the chain is Extracellular; the sequence is ENPLKADASRNIVLNKF. Residues 827 to 846 traverse the membrane as a helical segment; that stretch reads DYFFTAVFTIELVLKLISYG. Residues 847-854 are Cytoplasmic-facing; that stretch reads FVLHDGAF. Residues 855 to 877 traverse the membrane as a helical segment; that stretch reads CRSAFNLLDLLVVCVSLISIFFN. Residues 878–885 are Extracellular-facing; sequence SNAISVVK. The helical transmembrane segment at 886–900 threads the bilayer; sequence ILRVLRVLRPLRAIN. Topologically, residues 901–921 are cytoplasmic; that stretch reads RAKGLKHVVQCVIVAVKTIGN. Residues 922-941 traverse the membrane as a helical segment; that stretch reads IVLVTCLLQFMFAVIGVQLF. Residues 942–1030 are Extracellular-facing; it reads KGKFFSCSDG…NGGPIYNFRP (89 aa). A dihydropyridine binding region spans residues 979 to 1068; sequence REWKNNKFHF…FQNEGEQEYK (90 aa). E1005 contributes to the Ca(2+) binding site. Residues 1031-1055 traverse the membrane as a helical segment; the sequence is IVAAYYIIYIIIIAFFMVNIFVGFV. At 1056–1110 the chain is on the cytoplasmic side; sequence IVTFQNEGEQEYKNCELDKNQRNCIEFALKAKPVRRYIPKHSIQYKVWWFVTSSS. An IV repeat occupies 1096–1370; it reads HSIQYKVWWF…LFVAVIMDNF (275 aa). Residues 1111 to 1129 form a helical membrane-spanning segment; sequence FEYSIFVLIMINTVTLAMK. Residues 1130–1143 lie on the Extracellular side of the membrane; that stretch reads FYKQPEYYSEILDA. Residues 1144-1163 traverse the membrane as a helical segment; that stretch reads LNMIFTAVFSLEFIFKLAAF. Topologically, residues 1164-1172 are cytoplasmic; that stretch reads RFKNYFGDA. Residues 1173–1191 form a helical membrane-spanning segment; it reads WNTFDFIIVLGSFIDIVYS. At 1192–1219 the chain is on the extracellular side; sequence EIKTKEQALATCDGQSCNKAKGGSTLIS. Residues 1220 to 1238 traverse the membrane as a helical segment; the sequence is INFFRLFRVMRLVKLLSKG. The Cytoplasmic portion of the chain corresponds to 1239–1257; the sequence is EGIRTLLWTFIKSFQALPY. Residues 1258 to 1277 traverse the membrane as a helical segment; it reads VALLIVMLFFIYAVIGMQVF. Residues 1278-1343 lie on the Extracellular side of the membrane; it reads GKIMLEEGTS…AVNNCGSSIA (66 aa). Positions 1327–1389 are dihydropyridine binding; sequence KCDPESDAVN…LGPHHLDEFI (63 aa). A phenylalkylamine binding region spans residues 1337 to 1378; it reads NCGSSIAFPYFISFYVLCSFLIINLFVAVIMDNFDYLTRDWS. The helical transmembrane segment at 1344 to 1362 threads the bilayer; it reads FPYFISFYVLCSFLIINLF. Over 1363 to 1687 the chain is Cytoplasmic; it reads VAVIMDNFDY…PKSKDKDEEF (325 aa).

This sequence belongs to the calcium channel alpha-1 subunit (TC 1.A.1.11) family. Predominantly expressed in the larval body wall musculature. In adults, highest expression in thorax followed by head and at a lower extent by abdomen.

The protein resides in the membrane. In terms of biological role, voltage-sensitive calcium channels (VSCC) mediate the entry of calcium ions into excitable cells and are also involved in a variety of calcium-dependent processes, including muscle contraction, hormone or neurotransmitter release, gene expression, cell motility, cell division and cell death. MDL-alpha1 encodes a dihydropyridine- and diltiazem-sensitive current in larval body wall muscle. The chain is Muscle calcium channel subunit alpha-1 from Musca domestica (House fly).